The chain runs to 663 residues: Translation factor GUF1 homolog, mitochondrial (663 aa).

The N-terminal 33 residues, 1-33 (MAGAAALRRSARRVVLPGAYALSRALQHPERLL), are a transit peptide targeting the mitochondrion. The tr-type G domain occupies 55-247 (ERVRNFSIIA…AVIERIPSPP (193 aa)). GTP is bound by residues 64 to 71 (AHVDHGKS), 140 to 144 (DTPGH), and 194 to 197 (NKID).

The protein belongs to the TRAFAC class translation factor GTPase superfamily. Classic translation factor GTPase family. LepA subfamily.

Its subcellular location is the mitochondrion inner membrane. The catalysed reaction is GTP + H2O = GDP + phosphate + H(+). Functionally, promotes mitochondrial protein synthesis. May act as a fidelity factor of the translation reaction, by catalyzing a one-codon backward translocation of tRNAs on improperly translocated ribosomes. Binds to mitochondrial ribosomes in a GTP-dependent manner. The chain is Translation factor GUF1 homolog, mitochondrial from Oryza sativa subsp. japonica (Rice).